A 339-amino-acid polypeptide reads, in one-letter code: Anthranilate phosphoribosyltransferase (339 aa).

Residues G82, 85-86 (GD), T90, 92-95 (NIST), and 110-118 (KHGNRAVSS) contribute to the 5-phospho-alpha-D-ribose 1-diphosphate site. Position 82 (G82) interacts with anthranilate. Position 94 (S94) interacts with Mg(2+). Residues N113 and R168 each coordinate anthranilate. D227 and E228 together coordinate Mg(2+).

The protein belongs to the anthranilate phosphoribosyltransferase family. As to quaternary structure, homodimer. Requires Mg(2+) as cofactor.

It carries out the reaction N-(5-phospho-beta-D-ribosyl)anthranilate + diphosphate = 5-phospho-alpha-D-ribose 1-diphosphate + anthranilate. It functions in the pathway amino-acid biosynthesis; L-tryptophan biosynthesis; L-tryptophan from chorismate: step 2/5. Functionally, catalyzes the transfer of the phosphoribosyl group of 5-phosphorylribose-1-pyrophosphate (PRPP) to anthranilate to yield N-(5'-phosphoribosyl)-anthranilate (PRA). The sequence is that of Anthranilate phosphoribosyltransferase from Clostridium beijerinckii (strain ATCC 51743 / NCIMB 8052) (Clostridium acetobutylicum).